We begin with the raw amino-acid sequence, 249 residues long: Acetylglutamate kinase (249 aa).

Substrate contacts are provided by residues 38–39 (GG), Arg-60, and Asn-147.

It belongs to the acetylglutamate kinase family. ArgB subfamily.

It localises to the cytoplasm. It carries out the reaction N-acetyl-L-glutamate + ATP = N-acetyl-L-glutamyl 5-phosphate + ADP. Its pathway is amino-acid biosynthesis; L-arginine biosynthesis; N(2)-acetyl-L-ornithine from L-glutamate: step 2/4. In terms of biological role, catalyzes the ATP-dependent phosphorylation of N-acetyl-L-glutamate. In Deinococcus geothermalis (strain DSM 11300 / CIP 105573 / AG-3a), this protein is Acetylglutamate kinase.